We begin with the raw amino-acid sequence, 237 residues long: Ribosomal RNA small subunit methyltransferase G (237 aa).

Residues Gly78, Phe83, 129 to 130 (AE), and Arg148 each bind S-adenosyl-L-methionine.

Belongs to the methyltransferase superfamily. RNA methyltransferase RsmG family.

The protein localises to the cytoplasm. Functionally, specifically methylates the N7 position of a guanine in 16S rRNA. This is Ribosomal RNA small subunit methyltransferase G from Streptococcus pyogenes serotype M18 (strain MGAS8232).